A 347-amino-acid polypeptide reads, in one-letter code: Gamma-glutamyl hydrolase 2 (347 aa).

A signal peptide spans M1–A22. A Gamma-glutamyl hydrolase domain is found at A45 to T341. C155 (nucleophile) is an active-site residue. Residue H268 is the Proton donor of the active site.

The protein belongs to the peptidase C26 family. As to expression, expressed in roots, in leaves, stems and siliques.

The protein localises to the vacuole. The protein resides in the secreted. It localises to the extracellular space. Its subcellular location is the cell wall. The catalysed reaction is (6S)-5,6,7,8-tetrahydrofolyl-(gamma-L-Glu)(n) + (n-1) H2O = (6S)-5,6,7,8-tetrahydrofolate + (n-1) L-glutamate. In terms of biological role, cleaves the polyglutamate sidechains of folate polyglutamates in the vacuole. Is important for polyglutamyl tail length determination before vacuolar exit. Plays a role on folate stability and intracellular folate content. Has endopeptidase activity against 4-amino-10-methylpteroyl penta-, tetra-, tri- and di-gamma-L-glutamate substrates and is responsible for the production of folic acid, also called pteroylglutamic acid (PteGlu) from teroylpolyglutamates. The sequence is that of Gamma-glutamyl hydrolase 2 (GGH2) from Arabidopsis thaliana (Mouse-ear cress).